We begin with the raw amino-acid sequence, 323 residues long: tRNA dimethylallyltransferase (323 aa).

32-39 (GPTASGKS) lines the ATP pocket. 34-39 (TASGKS) provides a ligand contact to substrate. The interaction with substrate tRNA stretch occupies residues 57-60 (DSMQ).

Belongs to the IPP transferase family. Monomer. Mg(2+) serves as cofactor.

It catalyses the reaction adenosine(37) in tRNA + dimethylallyl diphosphate = N(6)-dimethylallyladenosine(37) in tRNA + diphosphate. Functionally, catalyzes the transfer of a dimethylallyl group onto the adenine at position 37 in tRNAs that read codons beginning with uridine, leading to the formation of N6-(dimethylallyl)adenosine (i(6)A). The polypeptide is tRNA dimethylallyltransferase (Rhodopseudomonas palustris (strain BisB5)).